The chain runs to 207 residues: Small ribosomal subunit protein uS4 (207 aa).

The interval 35–54 (RPKPPGPQLGRPRRLSDRGQ) is disordered. One can recognise an S4 RNA-binding domain in the interval 97–163 (RRLDNVLFRL…AYFKTLAENI (67 aa)).

This sequence belongs to the universal ribosomal protein uS4 family. In terms of assembly, part of the 30S ribosomal subunit. Contacts protein S5. The interaction surface between S4 and S5 is involved in control of translational fidelity.

Functionally, one of the primary rRNA binding proteins, it binds directly to 16S rRNA where it nucleates assembly of the body of the 30S subunit. Its function is as follows. With S5 and S12 plays an important role in translational accuracy. This Dehalococcoides mccartyi (strain CBDB1) protein is Small ribosomal subunit protein uS4.